A 399-amino-acid chain; its full sequence is Yellow-related salivary protein LJM11 (399 aa).

The signal sequence occupies residues 1 to 18 (MKVFFSIFTLVLFQGTLG). Cys115 and Cys186 form a disulfide bridge. A glycan (N-linked (GlcNAc...) asparagine) is linked at Asn213. A disulfide bridge connects residues Cys319 and Cys395. Serotonin-binding residues include Thr345, Asn360, and Phe362.

Belongs to the major royal jelly protein family. In terms of tissue distribution, salivary gland (at protein level).

Its subcellular location is the secreted. In terms of biological role, probably modulates blood feeding of sand flies on vertebrate species by binding and sequestering different mediators involved in the host response. Binds biogenic amines. Binds serotonin with high affinity. Binds adrenaline and noradrenaline. Binds dopamine and octopamine. Poorly binds histamine. Induces a delayed type hypersensitivity response in host tissues. Induces systemic Th1 immune response in the host. Immunogenic; elicits antibody production in the host. Functions as a chemoattractant for host neutrophils; likely acts through a G-protein-coupled receptor and effect is dependent on calcium influx. (Microbial infection) Modulates infection caused by Leishmania species in the host. The protein is Yellow-related salivary protein LJM11 of Lutzomyia longipalpis (Sand fly).